A 154-amino-acid chain; its full sequence is Transcriptional repressor NrdR (154 aa).

A zinc finger spans residues 3 to 34 (CPFCRHPDSRVIDSRETDEGQAIRRRRSCPEC). One can recognise an ATP-cone domain in the interval 46–136 (LAVVKRSGVT…VYRSFESADD (91 aa)).

Belongs to the NrdR family. It depends on Zn(2+) as a cofactor.

Functionally, negatively regulates transcription of bacterial ribonucleotide reductase nrd genes and operons by binding to NrdR-boxes. The polypeptide is Transcriptional repressor NrdR (Mycobacterium avium (strain 104)).